Here is a 96-residue protein sequence, read N- to C-terminus: Protein RnfH (96 aa).

This sequence belongs to the UPF0125 (RnfH) family.

The protein is Protein RnfH of Cronobacter sakazakii (strain ATCC BAA-894) (Enterobacter sakazakii).